A 411-amino-acid chain; its full sequence is Phosphopentomutase (411 aa).

The Mn(2+) site is built by Asp14, Asp306, His311, Asp347, His348, and His359.

Belongs to the phosphopentomutase family. Requires Mn(2+) as cofactor.

It localises to the cytoplasm. It catalyses the reaction 2-deoxy-alpha-D-ribose 1-phosphate = 2-deoxy-D-ribose 5-phosphate. It carries out the reaction alpha-D-ribose 1-phosphate = D-ribose 5-phosphate. It participates in carbohydrate degradation; 2-deoxy-D-ribose 1-phosphate degradation; D-glyceraldehyde 3-phosphate and acetaldehyde from 2-deoxy-alpha-D-ribose 1-phosphate: step 1/2. In terms of biological role, isomerase that catalyzes the conversion of deoxy-ribose 1-phosphate (dRib-1-P) and ribose 1-phosphate (Rib-1-P) to deoxy-ribose 5-phosphate (dRib-5-P) and ribose 5-phosphate (Rib-5-P), respectively. This Lactococcus lactis subsp. cremoris (strain SK11) protein is Phosphopentomutase.